The primary structure comprises 720 residues: ATP-dependent RNA helicase glh-3 (720 aa).

Polar residues predominate over residues 1-11 (MDKSPTKTSIR). Disordered regions lie at residues 1 to 34 (MDKS…SCIK) and 125 to 180 (LNSR…SYGN). Basic and acidic residues-rich tracts occupy residues 141–154 (NVKE…RSDD) and 162–172 (SAKDEERDRDS). CCHC-type zinc fingers lie at residues 202 to 219 (NTCF…ECSA) and 222 to 239 (RECA…ECAS). The short motif at 298-326 (KSFSDSDIPQSMRRNVERAGYTRTTPIQQ) is the Q motif element. The 185-residue stretch at 329–513 (LPLVADGKDI…RKLLREDYTM (185 aa)) folds into the Helicase ATP-binding domain. 342–349 (AQTGSGKT) contributes to the ATP binding site. The short motif at 456 to 459 (DEAD) is the DEAD box element. Residues 549 to 698 (DIDTYTTEKN…VVPSWMKEAA (150 aa)) enclose the Helicase C-terminal domain. Residues 696–720 (EAAGGTSNPNKFEKSIDTEEPEEAW) form a disordered region.

The protein belongs to the DEAD box helicase family. DDX4/VASA subfamily. As to quaternary structure, interacts with csn-5. Interacts (via C-terminus) with kgb-1. Interacts with zyx-1.

The protein resides in the cytoplasm. The catalysed reaction is ATP + H2O = ADP + phosphate + H(+). In terms of biological role, probable ATP-binding RNA helicase. This is ATP-dependent RNA helicase glh-3 from Caenorhabditis elegans.